The primary structure comprises 71 residues: cAMP-dependent protein kinase inhibitor beta (71 aa).

The tract at residues 1 to 21 (MTDVESVISSFASSARAGRRN) is disordered. Position 2 is a blocked amino end (Thr) (threonine 2). Serine 35 carries the post-translational modification Phosphoserine. The tract at residues 51–71 (AKMKNEEKDQGQPKKPLDEDK) is disordered.

Belongs to the PKI family. Testis.

Its function is as follows. Extremely potent competitive inhibitor of cAMP-dependent protein kinase activity, this protein interacts with the catalytic subunit of the enzyme after the cAMP-induced dissociation of its regulatory chains. The chain is cAMP-dependent protein kinase inhibitor beta (Pkib) from Rattus norvegicus (Rat).